Consider the following 499-residue polypeptide: MWTADEIAQLCYAHYNVRLPKQGKPEPNREWTLLAAVVKIQASANQACDIPEKEVQVTKEVVSMGTGTKCIGQSKMRESGDILNDSHAEIIARRSFQRYLLHQLHLAAVLKEDSIFVPGTQRGLWRLRPDLSFVFFSSHTPCGDASIIPMLEFEEQPCCPVIRSWANNSPVQETENLEDSKDKRNCEDPASPVAKKMRLGTPARSLSNCVAHHGTQESGPVKPDVSSSDLTKEEPDAANGIASGSFRVVDVYRTGAKCVPGETGDLREPGAAYHQVGLLRVKPGRGDRTCSMSCSDKMARWNVLGCQGALLMHFLEKPIYLSAVVIGKCPYSQEAMRRALTGRCEETLVLPRGFGVQELEIQQSGLLFEQSRCAVHRKRGDSPGRLVPCGAAISWSAVPQQPLDVTANGFPQGTTKKEIGSPRARSRISKVELFRSFQKLLSSIADDEQPDSIRVTKKLDTYQEYKDAASAYQEAWGALRRIQPFASWIRNPPDYHQFK.

The A to I editase domain occupies 63-498 (SMGTGTKCIG…IRNPPDYHQF (436 aa)). A Zn(2+)-binding site is contributed by His-87. The active-site Proton donor is Glu-89. Residues Arg-93 and Arg-94 each coordinate 1D-myo-inositol hexakisphosphate. Cys-142 provides a ligand contact to Zn(2+). 2 disordered regions span residues 170–194 (PVQE…SPVA) and 212–237 (HHGT…EPDA). Over residues 178 to 187 (EDSKDKRNCE) the composition is skewed to basic and acidic residues. Position 191 is a phosphoserine (Ser-191). Cys-294 contacts Zn(2+). Positions 297, 300, 430, and 466 each coordinate 1D-myo-inositol hexakisphosphate.

The protein belongs to the ADAT1 family. It depends on 1D-myo-inositol hexakisphosphate as a cofactor.

It carries out the reaction adenosine(37) in tRNA(Ala) + H2O + H(+) = inosine(37) in tRNA(Ala) + NH4(+). Its function is as follows. Specifically deaminates adenosine-37 to inosine in tRNA-Ala. This is tRNA-specific adenosine deaminase 1 (Adat1) from Mus musculus (Mouse).